The sequence spans 254 residues: Protein PET122, mitochondrial (254 aa).

A mitochondrion-targeting transit peptide spans 1 to 8; it reads MLTITKRL. The segment at 185–254 is essential for PET122 function; that stretch reads QAAALALFGR…IKRRGFEINT (70 aa).

The protein localises to the mitochondrion inner membrane. Required for expression of the mitochondrial gene for cytochrome c oxidase subunit 3 (COX3). PET122 seems to work by directly interacting with the small ribosomal subunit to promote translation initiation on the COX3 mRNA. The chain is Protein PET122, mitochondrial (PET122) from Saccharomyces cerevisiae (strain ATCC 204508 / S288c) (Baker's yeast).